Here is a 947-residue protein sequence, read N- to C-terminus: Receptor-like protein 56 (947 aa).

The N-terminal stretch at 1–27 is a signal peptide; that stretch reads MEGKVFSGQKLILVMLLLGHLHGFSSC. Residues 28 to 899 are Extracellular-facing; it reads IEKERKALLE…EDDKEVAIDM (872 aa). N-linked (GlcNAc...) asparagine glycans are attached at residues N60, N75, and N98. LRR repeat units lie at residues 105 to 128, 134 to 157, 159 to 182, 183 to 207, 209 to 232, 233 to 257, 259 to 281, 282 to 305, and 307 to 330; these read FEEV…VEGY, LRNL…FLNA, TSLT…ELKN, LTNL…EFPY, KKLK…GLKN, LTNL…VFCE, KNLQ…CFGN, LNKL…SFSS, and ESLE…PLTN. 3 N-linked (GlcNAc...) asparagine glycosylation sites follow: N141, N148, and N182. Residue N232 is glycosylated (N-linked (GlcNAc...) asparagine). A glycan (N-linked (GlcNAc...) asparagine) is linked at N330. Residues 332–356 form an LRR 10; degenerate repeat; it reads TKLKVFIFSSKDDMVQVKIESTWQP. 18 LRR repeats span residues 357 to 380, 381 to 404, 405 to 427, 428 to 450, 452 to 476, 477 to 500, 502 to 527, 529 to 549, 550 to 575, 577 to 598, 600 to 616, 617 to 640, 642 to 663, 664 to 686, 757 to 780, 781 to 804, 805 to 829, and 831 to 854; these read LFQL…LMYQ, KNLH…LLEN, NPEL…PTSV, HNLQ…NFGR, LPNL…MGEM, YNIS…FVSS, FSLS…NFTS, IVLR…LLTL, VDLC…VFEY, NFLD…SLDN, LFLH…DTFL, GSIQ…VDTQ, ISFL…LCEF, SKMR…CFNN, LNSM…ELGD, LFKL…SFSK, LQDI…LTNL, and SLAI…QFNT. N415 is a glycosylation site (N-linked (GlcNAc...) asparagine). N-linked (GlcNAc...) asparagine glycans are attached at residues N459, N478, N488, and N524. An N-linked (GlcNAc...) asparagine glycan is attached at N606. An N-linked (GlcNAc...) asparagine glycan is attached at N686. 4 N-linked (GlcNAc...) asparagine glycosylation sites follow: N788, N828, N836, and N841. Residues 900-920 form a helical membrane-spanning segment; the sequence is LVFYWSTAGTYVTALIGILVL. The Cytoplasmic segment spans residues 921 to 947; that stretch reads MCVDCSWRRAWLRLVDAFIASAKSKLA.

It belongs to the RLP family.

The protein localises to the cell membrane. In Arabidopsis thaliana (Mouse-ear cress), this protein is Receptor-like protein 56.